Reading from the N-terminus, the 429-residue chain is Lysine-specific demethylase JMJ30 (429 aa).

A JmjC domain is found at 272-429 (SSPMEPTYLA…WSNEAESSSS (158 aa)). Residues His-326, Asp-328, and His-405 each coordinate Fe cation.

Belongs to the JARID1 histone demethylase family. Interacts with EFM. Binds to ATXR2, ARF7 and ARF19. Fe(2+) serves as cofactor. In terms of tissue distribution, expressed ubiquitously in vasculatures, roots, rosette leaves, stems, inflorescences and siliques. Mainly present in the root meristem and root differentiation area. Observed at high level in callus.

Its subcellular location is the nucleus. It is found in the cytoplasm. The protein resides in the endoplasmic reticulum. It catalyses the reaction N(6),N(6),N(6)-trimethyl-L-lysyl(36)-[histone H3] + 2 2-oxoglutarate + 2 O2 = N(6)-methyl-L-lysyl(36)-[histone H3] + 2 formaldehyde + 2 succinate + 2 CO2. The catalysed reaction is N(6),N(6),N(6)-trimethyl-L-lysyl(27)-[histone H3] + 2 2-oxoglutarate + 2 O2 = N(6)-methyl-L-lysyl(27)-[histone H3] + 2 formaldehyde + 2 succinate + 2 CO2. The enzyme catalyses N(6),N(6)-dimethyl-L-lysyl(36)-[histone H3] + 2 2-oxoglutarate + 2 O2 = L-lysyl(36)-[histone H3] + 2 formaldehyde + 2 succinate + 2 CO2. Histone demethylase that demethylates 'Lys-36' (H3K36me) of histone H3 with a specific activity for H3K36me3 and H3K36me2. Also active on 'Lys-27' (H3K27me) of histone H3 with a specific activity for H3K27me3 and H3K27me2. No activity on H3K36me1 and H3K27me1. Involved in the control of flowering time by demethylating H3K36me2 at the FT locus and repressing its expression. Acts within the central clock and contributes, in parallel with LUX, to temperature compensation, probably as a component of the evening complex, to maintain circadian period at increasing temperatures; this mechanism involves binding to and regulation of CCA1 and PRR7 promoters. Works in concert with TOC1 to promote the morning-phased clock genes CCA1 and LHY which function as components of the central oscillator. Together with JMJ32, regulates the flowering-repressor FLOWERING LOCUS C (FLC) locus by removing the repressive histone modification H3 lysine 27 trimethylation (H3K27me3), especially at elevated temperatures (e.g. 29 degrees Celsius), thus preventing extreme precocious flowering. JMJ30 and JMJ32 are regulators involved in the integration of abscisic acid (ABA) and brassinosteroids (BR) signaling pathways. Together with JMJ32, controls ABA-mediated growth arrest during the post-germination stage in unfavorable conditions, and responses to ABA during root development, via the removal of repressive histone mark (H3K27me3) from the SnRK2.8 promoter, thus promoting SnRK2.8 expression and subsequent kinase-dependent ABI3 activation. In addition, removes the repressive histone marks (H3K27me3) from the BZR1 locus in response to stress and ABA, thus activating the BR signaling pathway which, in turn, inhibits the ABA signaling pathway. Able to drive tissue identity changes to promote callus formation form somatic cells via a massive genome-wide chromatin remodeling (e.g. H3K9me3 demethylation) leading to the induction of Lateral organ Boundaries-Domain (LBD) genes (e.g. LBD16 and LBD29) that establish root primordia; when in complex with ARF proteins (e.g. ARF7 and ARF19), recruits ATXR2 which promotes the deposition of H3K36me3 at LBD genes promoters, thus ensuring their stable activation during callus formation. In Arabidopsis thaliana (Mouse-ear cress), this protein is Lysine-specific demethylase JMJ30.